A 21-amino-acid polypeptide reads, in one-letter code: Thylakoid lumenal 13.8 kDa protein (21 aa).

It localises to the plastid. It is found in the chloroplast thylakoid lumen. This chain is Thylakoid lumenal 13.8 kDa protein, found in Spinacia oleracea (Spinach).